The chain runs to 140 residues: Putative nickel-responsive regulator (140 aa).

4 residues coordinate Ni(2+): His76, His87, His89, and Cys95.

It belongs to the transcriptional regulatory CopG/NikR family. It depends on Ni(2+) as a cofactor.

Functionally, transcriptional regulator. This Rhodopseudomonas palustris (strain BisB5) protein is Putative nickel-responsive regulator.